We begin with the raw amino-acid sequence, 232 residues long: Succinyl-CoA:3-ketoacid coenzyme A transferase subunit A (232 aa).

24 to 30 (GGFGLCG) serves as a coordination point for CoA.

Belongs to the 3-oxoacid CoA-transferase subunit A family. Heterodimer of a subunit A and a subunit B.

The enzyme catalyses a 3-oxo acid + succinyl-CoA = a 3-oxoacyl-CoA + succinate. The sequence is that of Succinyl-CoA:3-ketoacid coenzyme A transferase subunit A (scoA) from Helicobacter pylori (strain J99 / ATCC 700824) (Campylobacter pylori J99).